Here is a 221-residue protein sequence, read N- to C-terminus: MDIEKAGSRREEEEPIVQRPKLDKGKGKAHVFAPPMNYNRIMDKHKQEKMSPAGWKRGVAIFDFVLRLIAAITAMAAAAKMATTEETLPFFTQFLQFQADYTDLPTMSSFVIVNSIVGGYLTLSLPFSIVCILRPLAVPPRLFLILCDTVMMGLTLMAASASAAIVYLAHNGNSSSNWLPVCQQFGDFCQGTSGAVVASFIAATLLMFLVILSAFALKRTT.

A compositionally biased stretch (basic and acidic residues) spans 1 to 12 (MDIEKAGSRREE). Positions 1–27 (MDIEKAGSRREEEEPIVQRPKLDKGKG) are disordered. At 1–58 (MDIEKAGSRREEEEPIVQRPKLDKGKGKAHVFAPPMNYNRIMDKHKQEKMSPAGWKRG) the chain is on the cytoplasmic side. Residues 59–79 (VAIFDFVLRLIAAITAMAAAA) form a helical membrane-spanning segment. Topologically, residues 80–109 (KMATTEETLPFFTQFLQFQADYTDLPTMSS) are extracellular. The chain crosses the membrane as a helical span at residues 110-130 (FVIVNSIVGGYLTLSLPFSIV). Over 131–148 (CILRPLAVPPRLFLILCD) the chain is Cytoplasmic. Residues 149 to 169 (TVMMGLTLMAASASAAIVYLA) traverse the membrane as a helical segment. At 170–194 (HNGNSSSNWLPVCQQFGDFCQGTSG) the chain is on the extracellular side. An N-linked (GlcNAc...) asparagine glycan is attached at Asn173. Residues 195 to 215 (AVVASFIAATLLMFLVILSAF) traverse the membrane as a helical segment. The Cytoplasmic portion of the chain corresponds to 216-221 (ALKRTT).

It belongs to the Casparian strip membrane proteins (CASP) family. As to quaternary structure, homodimer and heterodimers with other CASP proteins. Interacts with CASP1, CASP2, CASP4 and CASP5.

The protein resides in the cell membrane. Functionally, regulates membrane-cell wall junctions and localized cell wall deposition. Required for establishment of the Casparian strip membrane domain (CSD) and the subsequent formation of Casparian strips, a cell wall modification of the root endodermis that determines an apoplastic barrier between the intraorganismal apoplasm and the extraorganismal apoplasm and prevents lateral diffusion. In Arabidopsis thaliana (Mouse-ear cress), this protein is Casparian strip membrane protein 3 (CASP3).